The sequence spans 406 residues: Copper transport protein CTR1 (406 aa).

The Cytoplasmic segment spans residues 1-152; it reads MEGMNMGSSM…HHLHANNSGK (152 aa). Tandem repeats lie at residues 9–27, 28–46, and 47–65. Residues 9–65 are 3 X 19 AA tandem repeats of S-M-X-M-X-A-M-S-S-A-S-K-T-X-X-S-X-M-X; sequence SMNMDAMSSASKTVASSMASMSMDAMSSASKTILSSMSSMSMEAMSSASKTLASTMS. Residues 71 to 117 are disordered; that stretch reads SMGSSSMSGMSMSMSSTPTSSASAQTTSDSSMSGMSGMSSSDNSSSS. A helical membrane pass occupies residues 153 to 173; that stretch reads AFGIFLLFVVAAFVYKLLLFV. Residues 174 to 250 are Extracellular-facing; it reads SWCLEVHWFK…RAFLVFTSTM (77 aa). A helical membrane pass occupies residues 251–271; sequence IIYMLMLATMSFVLTYVFAVI. The Cytoplasmic segment spans residues 272-406; sequence TGLALSEVFF…LLPAEKFTHN (135 aa). Positions 304 to 315 match the REP-III motif; the sequence is CPGFGNCQCGRH. Positions 318–406 are disordered; that stretch reads PSPDPIAVAD…LLPAEKFTHN (89 aa). Ser344 is subject to Phosphoserine. A Glycyl lysine isopeptide (Lys-Gly) (interchain with G-Cter in ubiquitin) cross-link involves residue Lys345. Ser349 carries the phosphoserine modification. Composition is skewed to polar residues over residues 349–375 and 384–395; these read SENN…NQAN and SKLQEQSGNMDQ. Thr356 bears the Phosphothreonine mark. Residue Ser369 is modified to Phosphoserine.

Homooligomer. Extensively O-glycosylated.

The protein localises to the cell membrane. It carries out the reaction Cu(2+)(in) = Cu(2+)(out). In terms of biological role, high-affinity copper transporter of plasma membrane that mediates copper uptake under low copper conditions. Copper transport through the high affinity system requiring CTRl supplies the iron transport multicopper ferroxidase FET3 with copper, which in turn is required for ferrous iron uptake. The energy for translocation is unlikely to be directly derived from ATP hydrolysis and the exact mechanism driving the transmembrane transport of copper has still to be determined. Binds 4 copper ions via its C-terminal cystein-rich domain and is able to deliver Cu(I) directly to both the chaperone ATX1 and to an N-terminal domain of the CCC2 protein. Also able to mediate the uptake of the anticancer drug cisplatin. In Saccharomyces cerevisiae (strain ATCC 204508 / S288c) (Baker's yeast), this protein is Copper transport protein CTR1.